A 160-amino-acid chain; its full sequence is Ribosomal RNA large subunit methyltransferase H (160 aa).

S-adenosyl-L-methionine is bound by residues Gly-108 and 127–132; that span reads FGLMTW.

It belongs to the RNA methyltransferase RlmH family. As to quaternary structure, homodimer.

The protein resides in the cytoplasm. It catalyses the reaction pseudouridine(1915) in 23S rRNA + S-adenosyl-L-methionine = N(3)-methylpseudouridine(1915) in 23S rRNA + S-adenosyl-L-homocysteine + H(+). Functionally, specifically methylates the pseudouridine at position 1915 (m3Psi1915) in 23S rRNA. The polypeptide is Ribosomal RNA large subunit methyltransferase H (Bartonella bacilliformis (strain ATCC 35685 / KC583 / Herrer 020/F12,63)).